The following is a 684-amino-acid chain: Protein ecdysoneless (684 aa).

Residues 491–501 show a composition bias toward acidic residues; the sequence is EPELDSDDDEP. Disordered stretches follow at residues 491 to 528 and 603 to 624; these read EPEL…CQRN and TSVG…EDDF.

Belongs to the ECD family. Expressed in the ecdysone-producing larval ring gland, nervous system, imaginal disks and gonads.

It localises to the cytoplasm. Functionally, required in both the follicle cells and the germline for oocyte development. In Drosophila melanogaster (Fruit fly), this protein is Protein ecdysoneless.